The following is a 195-amino-acid chain: Probable prefoldin subunit 3 (195 aa).

The protein belongs to the prefoldin subunit alpha family. In terms of assembly, heterohexamer of two PFD-alpha type and four PFD-beta type subunits.

Binds specifically to cytosolic chaperonin (c-CPN) and transfers target proteins to it. Binds to nascent polypeptide chain and promotes folding in an environment in which there are many competing pathways for nonnative proteins. This is Probable prefoldin subunit 3 (pfdn3) from Dictyostelium discoideum (Social amoeba).